A 155-amino-acid chain; its full sequence is Ribosome maturation factor RimP (155 aa).

This sequence belongs to the RimP family.

It is found in the cytoplasm. Required for maturation of 30S ribosomal subunits. The sequence is that of Ribosome maturation factor RimP from Prochlorococcus marinus (strain MIT 9211).